We begin with the raw amino-acid sequence, 416 residues long: Vacuole membrane protein KMS2 (416 aa).

Gly2 bears the N-acetylglycine mark. Topologically, residues 2 to 59 (GYGNRASSKTPAISGLREKHQQDLEKLTLTSQPFKTLRLFVVAVFLYVRRWSSYLLAN) are cytoplasmic. A helical transmembrane segment spans residues 60 to 80 (VGWLILFCSIFVAFAALLVTL). Residues 81 to 100 (DGPHVKHVEELSEYTRFGLW) are Lumenal-facing. The helical transmembrane segment at 101-123 (WIFLGVASSIGLGSGLHTFVLYL) threads the bilayer. The Cytoplasmic segment spans residues 124–249 (GPHIALFTIK…WLLSHSQYLN (126 aa)). A helical transmembrane segment spans residues 250–270 (FFTILILASVPNPLFDLAGIM). The Lumenal portion of the chain corresponds to 271–281 (CGQFEKPFWEF). A helical transmembrane segment spans residues 282 to 304 (FLATLIGKAIIKTHIQTVFIICV). At 305 to 315 (CNNQLLDWVEN) the chain is on the cytoplasmic side. Residues 316 to 336 (ELIYILSFVPGFASALPELTA) form a helical membrane-spanning segment. The Lumenal segment spans residues 337–364 (KLRLMKEKYLIASPPVSSDINVKKWDLS). A helical transmembrane segment spans residues 365–385 (FASVWNGVVWLMLLNFFGQIV). At 386 to 416 (TSTAQRYLKKQQEEELDALTNKSSLTSKKSK) the chain is on the cytoplasmic side.

Belongs to the VMP1 family.

The protein resides in the endoplasmic reticulum membrane. Functionally, involved in the early secretory pathway. Required for the correct export of secretory products from the endoplasmic reticulum (ER) and involved in the maintenance of ER integrity. This is Vacuole membrane protein KMS2 from Arabidopsis thaliana (Mouse-ear cress).